A 99-amino-acid polypeptide reads, in one-letter code: MAKESMKAREIKRAKLVAKYAEKRAALKQIVRTGDPAEAFEAAQKLQELPKNSNPIRMHNRCKLTGRPKGYIRQFGVSRIQFREMASNGLIPGVKKASW.

The protein belongs to the universal ribosomal protein uS14 family. In terms of assembly, part of the 30S ribosomal subunit. Contacts proteins S3 and S10.

Functionally, binds 16S rRNA, required for the assembly of 30S particles and may also be responsible for determining the conformation of the 16S rRNA at the A site. The chain is Small ribosomal subunit protein uS14 from Bacteroides fragilis (strain ATCC 25285 / DSM 2151 / CCUG 4856 / JCM 11019 / LMG 10263 / NCTC 9343 / Onslow / VPI 2553 / EN-2).